The sequence spans 381 residues: Ceropsin (381 aa).

At 1–62 the chain is on the extracellular side; the sequence is MSISMDAGPG…MNPLWHALLG (62 aa). N-linked (GlcNAc...) asparagine glycosylation is present at asparagine 28. The chain crosses the membrane as a helical span at residues 63 to 83; the sequence is FTIGVLGFISMMGNGMVIYIF. Topologically, residues 84 to 96 are cytoplasmic; sequence MTTKNLKTPSNLL. The helical transmembrane segment at 97-117 threads the bilayer; sequence VVNLAFSDFLMMCAMSPAMVI. Residues 118-133 lie on the Extracellular side of the membrane; it reads NCYNETWVFGPFACEL. Residue asparagine 121 is glycosylated (N-linked (GlcNAc...) asparagine). The cysteines at positions 131 and 208 are disulfide-linked. The helical transmembrane segment at 134–154 threads the bilayer; that stretch reads YGCAGSLFGCASIWTMTMIAF. At 155 to 173 the chain is on the cytoplasmic side; that stretch reads DRYNVIVKGIAAKPMTNNG. A helical transmembrane segment spans residues 174-194; the sequence is ALLRILGIWAFSLAWTVAPFF. Residues 195 to 221 are Extracellular-facing; it reads GWNRYVPEGNMTACGTDYLTKDWFSRS. An N-linked (GlcNAc...) asparagine glycan is attached at asparagine 204. The helical transmembrane segment at 222–242 threads the bilayer; that stretch reads YIVVYSVFVYFAPLLLIVYSY. Residues 243 to 284 lie on the Cytoplasmic side of the membrane; it reads YYIVQAVSAHEKAMREQAKKMNVASLRSSEAANTSTECKLAK. A helical membrane pass occupies residues 285 to 305; it reads VALMTISLWFMAWTPYLVINY. At 306–316 the chain is on the extracellular side; that stretch reads TGILESAPISP. The chain crosses the membrane as a helical span at residues 317–339; sequence LATIWGSLFAKANAVYNPIVYGI. The Cytoplasmic portion of the chain corresponds to 340–381; the sequence is SHPKYQAALYKRFPVLQCHSTTTDEASSVASGTTVMEEKPTA.

It belongs to the G-protein coupled receptor 1 family. Opsin subfamily. Expressed bilaterally in dorsal and ventral anterior protocerebral cells and bilaterally in the dorsal posterior protocerebral and lateral posterior tritocerebral cells (at protein level). Expressed in the larval brain but not in the subesophageal ganglion or thoracic ganglion.

Its subcellular location is the membrane. Its function is as follows. Visual pigments are the light-absorbing molecules that mediate vision. They consist of an apoprotein, opsin, covalently linked to cis-retinal. May play a role in photoperiodic photoreception. The sequence is that of Ceropsin from Bombyx mori (Silk moth).